The sequence spans 789 residues: MYDDGPRKGKPGGLSMDAATAAGLAAVWPEYFPEESEFAADGRSARLAADLVDLFSSPDASDLLSRVEDDGDILSLPVDFQQLSNLTWITEALQENPKEALLSMGAAVHLIVCASRDLQLGDINKINIRLYNHTKTIALKNLKAAYIKKLVTVRGTVLKVSTVKPLVLQLNFQCMKCATKFPRVFCDGKFSPPVSCSIQGCKSRTFIPMRSTAKLMDFQKIRIQELASGESHEEGRVPRTIECELTEDLVDCCIPGETVTVTGIVKVLNNYMDVGGGKSKSRNQGLYYLYLEAISVRNSKVHAASGNSDAASGSFGFQAFTEKDLEFISKFKEEHGADVFRQILHSFCPSIYGHELVKAGITLALFGGVQKHSIDQNKVPVRGDIHAVVVGDPGLGKSQLLQAAAAVSPRGIYVCGNTTTNAGLTVAVVKDSMSNDYAFEAGAMVLADRGICCIDEFDKMSAEHQALLEAMEQQCVSVAKAGLVASLSARTSVLAAANPVGGHYDRAKTVNENLKMSAALLSRFDLVFILLDKPDELLDKRVSDHIIALHSNDGGPFTANKRIRTVPQFNPSTEFGVGRTSLASRLRLHPEKDKDFCPLPGPLLRKYISYARSHVNPRIFMPSPAADSLQKFYLDLRKQSDSADGTPITARQLESLVRLAEARARVDLREEVTLEDAKEVIDIMTESLYDKCVDEHGVVDFARSGGMSNQKQSKKFLRALNEQCDLQKKDCFTMNEMYNLADRISLQVANLDAIVESLNNAGYITKKGSSMYQVVTSSYQGSQATWSGR.

The C4-type zinc-finger motif lies at 174–201; that stretch reads CMKCATKFPRVFCDGKFSPPVSCSIQGC. The 208-residue stretch at 339–546 folds into the MCM domain; that stretch reads VFRQILHSFC…LLDKRVSDHI (208 aa). 391-398 contributes to the ATP binding site; it reads GDPGLGKS. Positions 522–525 match the Arginine finger motif; the sequence is SRFD.

The protein belongs to the MCM family.

Its subcellular location is the nucleus. It catalyses the reaction ATP + H2O = ADP + phosphate + H(+). Functionally, probable DNA helicase that may play a role in DNA repair durin meiosis. This chain is Probable DNA helicase MCM8 (MCM8), found in Oryza sativa subsp. indica (Rice).